We begin with the raw amino-acid sequence, 154 residues long: Protein-export protein SecB (154 aa).

It belongs to the SecB family. Homotetramer, a dimer of dimers. One homotetramer interacts with 1 SecA dimer.

Its subcellular location is the cytoplasm. Functionally, one of the proteins required for the normal export of preproteins out of the cell cytoplasm. It is a molecular chaperone that binds to a subset of precursor proteins, maintaining them in a translocation-competent state. It also specifically binds to its receptor SecA. The sequence is that of Protein-export protein SecB from Buchnera aphidicola subsp. Schizaphis graminum (strain Sg).